The following is a 265-amino-acid chain: Protein Rv2993c (265 aa).

Glu114, Glu116, and Asp145 together coordinate a divalent metal cation.

In the C-terminal section; belongs to the FAH family. The cofactor is a divalent metal cation.

The chain is Protein Rv2993c from Mycobacterium tuberculosis (strain ATCC 25618 / H37Rv).